A 237-amino-acid chain; its full sequence is N-alpha-acetyltransferase 40 (237 aa).

A lipid anchor (N-myristoyl glycine) is attached at G2. The N-acetyltransferase domain maps to 63–216 (SGLEPATVDW…EDCSYEILSR (154 aa)). Residues Y85, 127–129 (DVE), and Y138 each bind substrate. Residues 140-142 (VQL) and 148-153 (RKGLGK) each bind acetyl-CoA. Residue T174 coordinates substrate. N179 lines the acetyl-CoA pocket. Substrate is bound by residues S197 and Y211.

It belongs to the acetyltransferase family. NAA40 subfamily. In terms of tissue distribution, widely expressed; with the highest expression level in liver and the lowest expression in brain (at protein level).

The protein resides in the cytoplasm. It localises to the nucleus. It catalyses the reaction N-terminal L-seryl-[histone H4] + acetyl-CoA = N-terminal N(alpha)-acetyl-L-seryl-[histone H4] + CoA + H(+). The enzyme catalyses N-terminal L-seryl-[histone H2A] + acetyl-CoA = N-terminal N(alpha)-acetyl-L-seryl-[histone H2A] + CoA + H(+). Functionally, N-alpha-acetyltransferase that specifically mediates the acetylation of the N-terminal residues of histones H4 and H2A. In contrast to other N-alpha-acetyltransferase, has a very specific selectivity for histones H4 and H2A N-terminus and specifically recognizes the 'Ser-Gly-Arg-Gly sequence'. Acts as a negative regulator of apoptosis. May play a role in hepatic lipid metabolism. The chain is N-alpha-acetyltransferase 40 from Homo sapiens (Human).